The sequence spans 752 residues: Iron-sulfur clusters transporter ABCB7, mitochondrial (752 aa).

Residues 1 to 22 (MALLAIHSWRWAAAAVAFEKHK) constitute a mitochondrion transit peptide. Over 23 to 140 (HSAVLTRSLV…KDRPDLRARV (118 aa)) the chain is Mitochondrial matrix. One can recognise an ABC transmembrane type-1 domain in the interval 140-436 (VAISLGFLGG…LGTVYRETRQ (297 aa)). The helical transmembrane segment at 141 to 161 (AISLGFLGGAKAMNIVVPFMF) threads the bilayer. Topologically, residues 162-185 (KYAVDSLNQMSGNMLNLSDAPNTV) are mitochondrial intermembrane. The chain crosses the membrane as a helical span at residues 186–206 (ATMATAVLIGYGVSRAGAAFF). Topologically, residues 207–259 (NEVRNAVFGKVAQNSIRRIAKNVFLHLHNLDLGFHLSRQTGALSKAIDRGTRG) are mitochondrial matrix. N6-acetyllysine is present on residues Lys216 and Lys251. Residues 260 to 280 (ISFVLSALVFNLLPIVFEMTL) form a helical membrane-spanning segment. The Mitochondrial intermembrane portion of the chain corresponds to 281 to 290 (VSSVLYYKCG). Residues 291 to 311 (AQFALVTLGTLGAYTAFTVAV) form a helical membrane-spanning segment. At 312 to 382 (TRWRTRFRIE…TLAMLNFGQS (71 aa)) the chain is on the mitochondrial matrix side. Position 315 to 319 (315 to 319 (RTRFR)) interacts with glutathione. Ser336 carries the phosphoserine modification. A Phosphotyrosine modification is found at Tyr340. Residue Thr342 is modified to Phosphothreonine. Residue Lys350 is modified to N6-acetyllysine. 378-381 (NFGQ) is a binding site for glutathione. Residues 383–403 (AIFSVGLTAIMVLASQGIVAG) traverse the membrane as a helical segment. The Mitochondrial intermembrane segment spans residues 404-409 (ALTVGD). The helical transmembrane segment at 410-430 (LVMVNGLLFQLSLPLNFLGTV) threads the bilayer. A glutathione-binding site is contributed by Gly428. At 431-752 (YRETRQALID…SVKGCGNCSC (322 aa)) the chain is on the mitochondrial matrix side. Residues 472-706 (VAFDNVHFEY…SSSIYSEMWH (235 aa)) enclose the ABC transporter domain. ATP-binding positions include Tyr481 and 505–516 (GGSGSGKSTIVR).

The protein belongs to the ABC transporter superfamily. ABCB family. Heavy Metal importer (TC 3.A.1.210) subfamily. Homodimer or heterodimer. Interacts with C10orf88/PAAT. Forms a complex with ABCB10 and FECH, where a dimeric FECH bridges ABCB7 and ABCB10 homodimers; this complex may be required for cellular iron homeostasis, mitochondrial function and heme biosynthesis. Interacts with FECH. Interacts with ATP5F1A. Interacts with COX4I1; this interaction allows the regulation of cellular iron homeostasis and cellular reactive oxygen species (ROS) levels in cardiomyocytes.

It localises to the mitochondrion inner membrane. It catalyses the reaction (glutathione)4[2Fe(III)-2S] cluster(in) + ATP + H2O = (glutathione)4[2Fe(III)-2S] cluster(out) + ADP + phosphate + H(+). In terms of biological role, exports glutathione-coordinated iron-sulfur clusters such as [2Fe-2S]-(GS)4 cluster from the mitochondria to the cytosol in an ATP-dependent manner allowing the assembly of the cytosolic iron-sulfur (Fe/S) cluster-containing proteins and participates in iron homeostasis. Moreover, through a functional complex formed of ABCB7, FECH and ABCB10, also plays a role in the cellular iron homeostasis, mitochondrial function and heme biosynthesis. In cardiomyocytes, regulates cellular iron homeostasis and cellular reactive oxygen species (ROS) levels through its interaction with COX4I1. May also play a role in hematopoiesis. This is Iron-sulfur clusters transporter ABCB7, mitochondrial from Rattus norvegicus (Rat).